Here is a 42-residue protein sequence, read N- to C-terminus: Photosystem II reaction center protein J (42 aa).

The helical transmembrane segment at 10–30 threads the bilayer; that stretch reads IPLWLIGTVVGSLAIGLLAIF.

This sequence belongs to the PsbJ family. In terms of assembly, PSII is composed of 1 copy each of membrane proteins PsbA, PsbB, PsbC, PsbD, PsbE, PsbF, PsbH, PsbI, PsbJ, PsbK, PsbL, PsbM, PsbT, PsbX, PsbY, PsbZ, Psb30/Ycf12, at least 3 peripheral proteins of the oxygen-evolving complex and a large number of cofactors. It forms dimeric complexes.

The protein localises to the plastid. It localises to the chloroplast thylakoid membrane. Its function is as follows. One of the components of the core complex of photosystem II (PSII). PSII is a light-driven water:plastoquinone oxidoreductase that uses light energy to abstract electrons from H(2)O, generating O(2) and a proton gradient subsequently used for ATP formation. It consists of a core antenna complex that captures photons, and an electron transfer chain that converts photonic excitation into a charge separation. The sequence is that of Photosystem II reaction center protein J from Stigeoclonium helveticum (Green alga).